Reading from the N-terminus, the 501-residue chain is Aspartyl/glutamyl-tRNA(Asn/Gln) amidotransferase subunit B (501 aa).

Residues 276–299 form a disordered region; it reads HYQEADGSTSKGRPKETAEDYRYF. Positions 288 to 299 are enriched in basic and acidic residues; that stretch reads RPKETAEDYRYF.

This sequence belongs to the GatB/GatE family. GatB subfamily. As to quaternary structure, heterotrimer of A, B and C subunits.

The enzyme catalyses L-glutamyl-tRNA(Gln) + L-glutamine + ATP + H2O = L-glutaminyl-tRNA(Gln) + L-glutamate + ADP + phosphate + H(+). The catalysed reaction is L-aspartyl-tRNA(Asn) + L-glutamine + ATP + H2O = L-asparaginyl-tRNA(Asn) + L-glutamate + ADP + phosphate + 2 H(+). Functionally, allows the formation of correctly charged Asn-tRNA(Asn) or Gln-tRNA(Gln) through the transamidation of misacylated Asp-tRNA(Asn) or Glu-tRNA(Gln) in organisms which lack either or both of asparaginyl-tRNA or glutaminyl-tRNA synthetases. The reaction takes place in the presence of glutamine and ATP through an activated phospho-Asp-tRNA(Asn) or phospho-Glu-tRNA(Gln). This Corynebacterium glutamicum (strain R) protein is Aspartyl/glutamyl-tRNA(Asn/Gln) amidotransferase subunit B.